We begin with the raw amino-acid sequence, 364 residues long: PHD finger protein 6 (364 aa).

Position 2 is an N-acetylserine (Ser2). 2 short sequence motifs (nuclear localization signal) span residues 13–16 and 129–133; these read RQRK and RKHKK. Residues 14–52 form a C2HC pre-PHD-type 1 zinc finger; it reads QRKCGFCKSNRDKECGQLLISENQKVAAHHKCMLFSSAL. Residues 14 to 132 are extended PHD1 domain (ePHD1); it reads QRKCGFCKSN…IYMVYCRKHK (119 aa). Residues 80 to 132 form a PHD-type 1 zinc finger; it reads LMCSLCHCPGATIGCDVKTCHRTYHYHCALHDKAQIREKPSQGIYMVYCRKHK. A phosphoserine mark is found at Ser138, Ser145, and Ser155. Residues 139 to 211 form a disordered region; that stretch reads EADLEESFNE…RSSPNDTRPK (73 aa). The Nucleolar localization signal motif lies at 157 to 169; sequence KTKKKSRKGRPRK. A compositionally biased stretch (basic residues) spans 157-171; it reads KTKKKSRKGRPRKTN. Residue Lys173 forms a Glycyl lysine isopeptide (Lys-Gly) (interchain with G-Cter in SUMO2) linkage. 2 positions are modified to phosphoserine: Ser183 and Ser199. The C2HC pre-PHD-type 2 zinc finger occupies 209–249; sequence RPKCGFCHVGEEENEARGKLHIFNAKKAAAHYKCMLFSSGT. Residues 209–330 are extended PHD2 domain (ePHD2); that stretch reads RPKCGFCHVG…IYKLYCKNHS (122 aa). Residue Lys227 forms a Glycyl lysine isopeptide (Lys-Gly) (interchain with G-Cter in SUMO2) linkage. The PHD-type 2 zinc-finger motif lies at 278-330; sequence MKCTLCSQPGATIGCEIKACVKTYHYHCGVQDKAKYIENMSRGIYKLYCKNHS. Residues 330-364 are disordered; the sequence is SGNDERDEEDEERESKSRGRVAIDQQLTQQQLNGN. The segment covering 354–364 has biased composition (polar residues); the sequence is QQLTQQQLNGN. A Phosphothreonine modification is found at Thr357.

In terms of assembly, interacts with UBTF. Interacts with the NuRD complex component RBBP4 (via the nucleolar localization motif), the interaction mediates transcriptional repression activity. At 12.5 dpc it is highly expressed in the embryonic central nervous system and at lower levels in other tissues. Very low levels present throughout the adult brain.

Its subcellular location is the nucleus. It localises to the nucleolus. The protein resides in the chromosome. The protein localises to the centromere. It is found in the kinetochore. Transcriptional regulator that associates with ribosomal RNA promoters and suppresses ribosomal RNA (rRNA) transcription. The protein is PHD finger protein 6 (Phf6) of Mus musculus (Mouse).